The chain runs to 436 residues: 3-ketoacyl-CoA thiolase (436 aa).

Residue Cys99 is the Acyl-thioester intermediate of the active site. Residues His392 and Cys422 each act as proton acceptor in the active site.

This sequence belongs to the thiolase-like superfamily. Thiolase family. In terms of assembly, heterotetramer of two alpha chains (FadJ) and two beta chains (FadI).

It is found in the cytoplasm. The enzyme catalyses an acyl-CoA + acetyl-CoA = a 3-oxoacyl-CoA + CoA. It functions in the pathway lipid metabolism; fatty acid beta-oxidation. Catalyzes the final step of fatty acid oxidation in which acetyl-CoA is released and the CoA ester of a fatty acid two carbons shorter is formed. In Salmonella choleraesuis (strain SC-B67), this protein is 3-ketoacyl-CoA thiolase.